Reading from the N-terminus, the 575-residue chain is Centrosomal protein POC5 (575 aa).

The tract at residues 1-26 is disordered; it reads MSSDEEKYSLPVVQNDSSRGSSVSSN. Phosphoserine occurs at positions 105 and 109. Residues 142-173 form a Centrin-binding (CBR) 1 repeat; it reads HEILVSDFLVSDENLQKMENVLDLWSSGLKTN. The stretch at 191–222 forms a coiled coil; sequence MEMRKEKEKHAAHLKQLCNQINELKELQKTFE. Centrin-binding (CBR) repeat units lie at residues 231–262 and 263–295; these read VISS…HVRA and RQDV…VQKQ. Residues 316 to 355 are a coiled coil; sequence SNDYEAKVAMLSGALENAKAEIQRMQHEKEHFEDSMKKAF. Disordered regions lie at residues 376-411 and 538-575; these read AGID…MPLP and KYPR…KVVD. Residues 382–400 are compositionally biased toward basic and acidic residues; the sequence is NNKKEEYGPGVQGKEHSAH. The residue at position 538 (Lys-538) is an N6-acetyllysine. A compositionally biased stretch (polar residues) spans 545–569; sequence PESSTSASRSLGTRSAHTQSLTSVH. A Phosphoserine modification is found at Ser-564.

This sequence belongs to the POC5 family. Interacts with CETN2 and CETN3. Forms a microtubule-associated complex with POC1B, CETN2 and FAM161A. Interacts with CCDC15. In terms of processing, hyperphosphorylated during recruitment to procentrioles in G2/M phase.

The protein localises to the cytoplasm. Its subcellular location is the cytoskeleton. It localises to the microtubule organizing center. The protein resides in the centrosome. It is found in the centriole. Its function is as follows. Essential for the assembly of the distal half of centrioles, required for centriole elongation. Acts as a negative regulator of centriole elongation. In Homo sapiens (Human), this protein is Centrosomal protein POC5 (POC5).